The primary structure comprises 388 residues: 1-deoxy-D-xylulose 5-phosphate reductoisomerase (388 aa).

NADPH is bound by residues T10, G11, S12, I13, K37, N38, and N123. Position 124 (K124) interacts with 1-deoxy-D-xylulose 5-phosphate. E125 lines the NADPH pocket. Mn(2+) is bound at residue D149. 1-deoxy-D-xylulose 5-phosphate contacts are provided by S150, E151, S175, and H198. Residue E151 coordinates Mn(2+). NADPH is bound at residue G204. 1-deoxy-D-xylulose 5-phosphate contacts are provided by S211, N216, K217, and E220. A Mn(2+)-binding site is contributed by E220.

It belongs to the DXR family. Mg(2+) serves as cofactor. Requires Mn(2+) as cofactor.

The enzyme catalyses 2-C-methyl-D-erythritol 4-phosphate + NADP(+) = 1-deoxy-D-xylulose 5-phosphate + NADPH + H(+). The protein operates within isoprenoid biosynthesis; isopentenyl diphosphate biosynthesis via DXP pathway; isopentenyl diphosphate from 1-deoxy-D-xylulose 5-phosphate: step 1/6. Catalyzes the NADPH-dependent rearrangement and reduction of 1-deoxy-D-xylulose-5-phosphate (DXP) to 2-C-methyl-D-erythritol 4-phosphate (MEP). The chain is 1-deoxy-D-xylulose 5-phosphate reductoisomerase from Pelagibacter ubique (strain HTCC1062).